Consider the following 278-residue polypeptide: Chitosanase (278 aa).

The signal sequence occupies residues 1–41; sequence MRLKHPTARLALAALLVAVPRSVAAAGTVHAAPAPAGATRL. Glu-63 functions as the Proton donor in the catalytic mechanism. Residue Asp-81 is the Nucleophile of the active site.

Belongs to the glycosyl hydrolase 46 family.

Its subcellular location is the secreted. It catalyses the reaction Endohydrolysis of beta-(1-&gt;4)-linkages between D-glucosamine residues in a partly acetylated chitosan.. In terms of biological role, aids in the defense against invading fungal pathogens by degrading their cell wall chitosan. This chain is Chitosanase (csn), found in Nocardioides sp. (strain N106).